The sequence spans 287 residues: Ret finger protein-like 4A (287 aa).

Residues 11–53 (CPVCLKDLEEAVQLKCGYACCLQCLNSLQKEPDGEGLLCRFCS) form an RING-type; degenerate zinc finger. A B30.2/SPRY domain is found at 78–276 (EPKLKSVLTM…LSICSVINPS (199 aa)).

Interacts with PSMB1, UBE2A and CCNB1.

It localises to the cytoplasm. The protein resides in the nucleus. The chain is Ret finger protein-like 4A (RFPL4A) from Homo sapiens (Human).